We begin with the raw amino-acid sequence, 322 residues long: Quinolinate synthase (322 aa).

Positions 38 and 55 each coordinate iminosuccinate. C100 serves as a coordination point for [4Fe-4S] cluster. Iminosuccinate is bound by residues 126–128 (YIN) and S143. Position 186 (C186) interacts with [4Fe-4S] cluster. Iminosuccinate contacts are provided by residues 212 to 214 (HPE) and T229. Residue C279 coordinates [4Fe-4S] cluster.

It belongs to the quinolinate synthase family. Type 2 subfamily. It depends on [4Fe-4S] cluster as a cofactor.

It localises to the cytoplasm. The enzyme catalyses iminosuccinate + dihydroxyacetone phosphate = quinolinate + phosphate + 2 H2O + H(+). It functions in the pathway cofactor biosynthesis; NAD(+) biosynthesis; quinolinate from iminoaspartate: step 1/1. Functionally, catalyzes the condensation of iminoaspartate with dihydroxyacetone phosphate to form quinolinate. This chain is Quinolinate synthase, found in Aquifex aeolicus (strain VF5).